The sequence spans 687 residues: Glycine--tRNA ligase beta subunit (687 aa).

The protein belongs to the class-II aminoacyl-tRNA synthetase family. As to quaternary structure, tetramer of two alpha and two beta subunits.

It is found in the cytoplasm. It catalyses the reaction tRNA(Gly) + glycine + ATP = glycyl-tRNA(Gly) + AMP + diphosphate. The sequence is that of Glycine--tRNA ligase beta subunit from Citrifermentans bemidjiense (strain ATCC BAA-1014 / DSM 16622 / JCM 12645 / Bem) (Geobacter bemidjiensis).